The sequence spans 376 residues: Putative 12-oxophytodienoate reductase 2 (376 aa).

Residues 31–33, A64, and Q106 each bind FMN; that span reads PLT. 178-181 provides a ligand contact to substrate; sequence HGAH. Y183 acts as the Proton donor in catalysis. Residues R230, G301, and 322-323 each bind FMN; that span reads GR.

This sequence belongs to the NADH:flavin oxidoreductase/NADH oxidase family. FMN serves as cofactor.

Putative oxophytodienoate reductase that may be involved in the biosynthesis or metabolism of oxylipin signaling molecules. The sequence is that of Putative 12-oxophytodienoate reductase 2 (OPR2) from Oryza sativa subsp. japonica (Rice).